We begin with the raw amino-acid sequence, 962 residues long: Putative primase C962R (962 aa).

Residues 607-775 form the SF3 helicase domain; it reads ELDARLWIMF…PDPGNPYEKK (169 aa). 636–643 contributes to the ATP binding site; the sequence is GGGCNGKT.

This sequence belongs to the asfivirus helicase C962R family.

This African swine fever virus (strain Badajoz 1971 Vero-adapted) (Ba71V) protein is Putative primase C962R.